The following is a 481-amino-acid chain: MTNSVDFSGRPFHFIGIGGIGMSALAYVLAKRQFPVSGSDLRPNHITHKLESIGAHIFGRQEASNLEFFRPQVLNSQEQLAADTKSKLPQVICSTAINTNNLEYKAALELGCPVLHRSDVLAALIADYYSIAVAGTHGKTTTSSMIGYMLLEAGLDPTILVGGEVNAWEGNARLGQSQYLVAEADESDGSLVKHAPEIGIITNIELDHPDHYDTLEEVIDIFQTFAKGCKTLIGSIDCATVRDRLQPTISYSLHSDTDADYTVTNIDYRADGTTALVWERGKALGVLKLRLLSRHNLSNALAAVAVGRALGLEFGAIAKGIATFEGARRRFELRGEVDGITFIDDYAHHPSEIRVTLAAARLQARPGQRVVAIFQPHRYSRTLTFLEEFAESFTHADLVVLTDIYSAGEPNLGQITGEQLAAEIAKQHSQVVYQPTLPSVCEYLLQTLRPGDLALFLGAGNLNQVIPEVITAFCEPAKATS.

135–141 (GTHGKTT) is an ATP binding site.

This sequence belongs to the MurCDEF family.

Its subcellular location is the cytoplasm. It carries out the reaction UDP-N-acetyl-alpha-D-muramate + L-alanine + ATP = UDP-N-acetyl-alpha-D-muramoyl-L-alanine + ADP + phosphate + H(+). Its pathway is cell wall biogenesis; peptidoglycan biosynthesis. Functionally, cell wall formation. This is UDP-N-acetylmuramate--L-alanine ligase from Nostoc punctiforme (strain ATCC 29133 / PCC 73102).